The sequence spans 578 residues: Threonylcarbamoyladenosine tRNA methylthiotransferase (578 aa).

The 109-residue stretch at 63-171 folds into the MTTase N-terminal domain; the sequence is QKIWIRTWGC…VVEVVEETIK (109 aa). Cysteine 72 and cysteine 108 together coordinate [4Fe-4S] cluster. Serine 121 is modified (phosphoserine). [4Fe-4S] cluster is bound by residues cysteine 137, cysteine 213, cysteine 217, and cysteine 220. The 232-residue stretch at 199 to 430 folds into the Radical SAM core domain; the sequence is RKNPLIEIIS…RVFHSYNPYD (232 aa). Positions 430 to 492 constitute a TRAM domain; it reads DHKIGERQQV…KHFLKGQPVS (63 aa). Threonine 498 is subject to Phosphothreonine. The chain crosses the membrane as a helical span at residues 553–570; the sequence is CALKVATGLALLALLLHF.

It belongs to the methylthiotransferase family. CDKAL1 subfamily. [4Fe-4S] cluster serves as cofactor. In terms of tissue distribution, expressed in pancreas, liver and skeletal muscle, especially in white muscle fibers.

Its subcellular location is the endoplasmic reticulum membrane. It catalyses the reaction N(6)-L-threonylcarbamoyladenosine(37) in tRNA + (sulfur carrier)-SH + AH2 + 2 S-adenosyl-L-methionine = 2-methylsulfanyl-N(6)-L-threonylcarbamoyladenosine(37) in tRNA + (sulfur carrier)-H + 5'-deoxyadenosine + L-methionine + A + S-adenosyl-L-homocysteine + 2 H(+). Its function is as follows. Catalyzes the methylthiolation of N6-threonylcarbamoyladenosine (t(6)A), leading to the formation of 2-methylthio-N6-threonylcarbamoyladenosine (ms(2)t(6)A) at position 37 in tRNAs that read codons beginning with adenine. In Mus musculus (Mouse), this protein is Threonylcarbamoyladenosine tRNA methylthiotransferase (Cdkal1).